Reading from the N-terminus, the 272-residue chain is MTTLACRKLAPHPESPRHQHAGPWLVWLHGLLGSGQDWLPVAQLCGDYPSLLIDLPGHGQSVSLSADGFADISRQLSQTLQANGIREYWLAGYSLGGRIAIYHACYGRHHGLQGLLVEGGNLGLENAELRQARLQQDRQWAQRFRQEPLPQVLDDWYQQAVFADLDPQQREQLVLLRADNHGPAVAEMLEATSLGHQPWLLPALQRLNVPYTYLCGDRDHKFLQLAQQYRLPLHTLARAGHNAHRANPGAFAAQVLAFLSQSSCLPPSSLSR.

This sequence belongs to the AB hydrolase superfamily. MenH family. As to quaternary structure, monomer.

It carries out the reaction 5-enolpyruvoyl-6-hydroxy-2-succinyl-cyclohex-3-ene-1-carboxylate = (1R,6R)-6-hydroxy-2-succinyl-cyclohexa-2,4-diene-1-carboxylate + pyruvate. It functions in the pathway quinol/quinone metabolism; 1,4-dihydroxy-2-naphthoate biosynthesis; 1,4-dihydroxy-2-naphthoate from chorismate: step 3/7. It participates in quinol/quinone metabolism; menaquinone biosynthesis. Catalyzes a proton abstraction reaction that results in 2,5-elimination of pyruvate from 2-succinyl-5-enolpyruvyl-6-hydroxy-3-cyclohexene-1-carboxylate (SEPHCHC) and the formation of 2-succinyl-6-hydroxy-2,4-cyclohexadiene-1-carboxylate (SHCHC). The sequence is that of 2-succinyl-6-hydroxy-2,4-cyclohexadiene-1-carboxylate synthase from Yersinia pestis (strain Pestoides F).